A 668-amino-acid polypeptide reads, in one-letter code: DNA ligase (668 aa).

Residues D34 to D38, S83 to L84, and E117 contribute to the NAD(+) site. K119 serves as the catalytic N6-AMP-lysine intermediate. Residues R140, E177, K293, and K317 each contribute to the NAD(+) site. Residues C411, C414, C429, and C434 each coordinate Zn(2+). Residues R591 to Q668 form the BRCT domain.

Belongs to the NAD-dependent DNA ligase family. LigA subfamily. Mg(2+) serves as cofactor. Mn(2+) is required as a cofactor.

It catalyses the reaction NAD(+) + (deoxyribonucleotide)n-3'-hydroxyl + 5'-phospho-(deoxyribonucleotide)m = (deoxyribonucleotide)n+m + AMP + beta-nicotinamide D-nucleotide.. DNA ligase that catalyzes the formation of phosphodiester linkages between 5'-phosphoryl and 3'-hydroxyl groups in double-stranded DNA using NAD as a coenzyme and as the energy source for the reaction. It is essential for DNA replication and repair of damaged DNA. The protein is DNA ligase of Citrifermentans bemidjiense (strain ATCC BAA-1014 / DSM 16622 / JCM 12645 / Bem) (Geobacter bemidjiensis).